Reading from the N-terminus, the 148-residue chain is Small ribosomal subunit protein eS19 (148 aa).

This sequence belongs to the eukaryotic ribosomal protein eS19 family. As to quaternary structure, part of the 30S ribosomal subunit.

May be involved in maturation of the 30S ribosomal subunit. This chain is Small ribosomal subunit protein eS19, found in Methanocaldococcus jannaschii (strain ATCC 43067 / DSM 2661 / JAL-1 / JCM 10045 / NBRC 100440) (Methanococcus jannaschii).